Here is a 324-residue protein sequence, read N- to C-terminus: Methionyl-tRNA formyltransferase (324 aa).

109-112 (SILP) is a (6S)-5,6,7,8-tetrahydrofolate binding site.

It belongs to the Fmt family.

It carries out the reaction L-methionyl-tRNA(fMet) + (6R)-10-formyltetrahydrofolate = N-formyl-L-methionyl-tRNA(fMet) + (6S)-5,6,7,8-tetrahydrofolate + H(+). Functionally, attaches a formyl group to the free amino group of methionyl-tRNA(fMet). The formyl group appears to play a dual role in the initiator identity of N-formylmethionyl-tRNA by promoting its recognition by IF2 and preventing the misappropriation of this tRNA by the elongation apparatus. This is Methionyl-tRNA formyltransferase from Acidothermus cellulolyticus (strain ATCC 43068 / DSM 8971 / 11B).